A 399-amino-acid chain; its full sequence is Enolase (399 aa).

(2R)-2-phosphoglycerate is bound at residue glutamine 152. Glutamate 194 functions as the Proton donor in the catalytic mechanism. Mg(2+) contacts are provided by aspartate 230, glutamate 273, and aspartate 301. Residues lysine 326, arginine 355, serine 356, and lysine 377 each coordinate (2R)-2-phosphoglycerate. Lysine 326 (proton acceptor) is an active-site residue.

It belongs to the enolase family. The cofactor is Mg(2+).

It is found in the cytoplasm. It localises to the secreted. The protein resides in the cell surface. It carries out the reaction (2R)-2-phosphoglycerate = phosphoenolpyruvate + H2O. It participates in carbohydrate degradation; glycolysis; pyruvate from D-glyceraldehyde 3-phosphate: step 4/5. Functionally, catalyzes the reversible conversion of 2-phosphoglycerate (2-PG) into phosphoenolpyruvate (PEP). It is essential for the degradation of carbohydrates via glycolysis. The polypeptide is Enolase (Methanocorpusculum labreanum (strain ATCC 43576 / DSM 4855 / Z)).